The chain runs to 261 residues: Hydrolase in agr operon (261 aa).

The CN hydrolase domain maps to 1–239; it reads MKVQIYQLPI…ADILTVDLNL (239 aa). The active-site Proton acceptor is Glu41. Lys110 serves as the catalytic Proton donor. Cys146 acts as the Nucleophile in catalysis.

This sequence belongs to the carbon-nitrogen hydrolase superfamily. NIT1/NIT2 family.

The chain is Hydrolase in agr operon from Staphylococcus aureus.